Here is a 147-residue protein sequence, read N- to C-terminus: Globin, polymeric component P3 (147 aa).

In terms of domain architecture, Globin spans His2–Glu146. Position 96 (His96) interacts with heme b.

It belongs to the globin family. In terms of assembly, polymer.

The polypeptide is Globin, polymeric component P3 (Glycera dibranchiata (Bloodworm)).